The sequence spans 517 residues: GMP synthase [glutamine-hydrolyzing] (517 aa).

In terms of domain architecture, Glutamine amidotransferase type-1 spans 11–202 (KIIALDFGSQ…AFDVCGAKAN (192 aa)). The active-site Nucleophile is the cysteine 88. Catalysis depends on residues histidine 176 and glutamate 178. A GMPS ATP-PPase domain is found at 203–392 (WTMDDFIDMQ…LGIPHELVWR (190 aa)). 230–236 (SGGVDSS) contributes to the ATP binding site.

In terms of assembly, homodimer.

The catalysed reaction is XMP + L-glutamine + ATP + H2O = GMP + L-glutamate + AMP + diphosphate + 2 H(+). Its pathway is purine metabolism; GMP biosynthesis; GMP from XMP (L-Gln route): step 1/1. Catalyzes the synthesis of GMP from XMP. This chain is GMP synthase [glutamine-hydrolyzing], found in Limosilactobacillus reuteri (strain DSM 20016) (Lactobacillus reuteri).